The primary structure comprises 133 residues: uncharacterized protein (133 aa).

2 helical membrane-spanning segments follow: residues 8–28 (MVLLLLLLLLLLLLLLLLLLL) and 46–66 (SFSILFLVSFSIGTFFSSIGA).

The protein resides in the membrane. This is an uncharacterized protein from Saccharomyces cerevisiae (strain ATCC 204508 / S288c) (Baker's yeast).